A 139-amino-acid chain; its full sequence is uncharacterized protein (139 aa).

Helical transmembrane passes span 38-60 (YFLHRMVVCLGVLLCAASLLYVF), 72-94 (FIILRSCVGCSVLLVVACLCAGS), and 114-136 (ITVVALLFGMGALVFNTVVLIVA).

It localises to the cell membrane. This is an uncharacterized protein from Treponema pallidum (strain Nichols).